Consider the following 437-residue polypeptide: MNIFEHDIQNLSQGNVVAILGSQWGDEGKGKIIDILSKHSDITCRFNGGANAGHTISVNDKKYALHLLPCGILYENNICVLGNGMVVHLKSLINEINSIGGNIIERLYLSDKSHILFDIHQTIDSIQENRKLKEGKQIGTTKRGIGPCYSTKVSRVGIRLGSLKNFEHFKNLYLKLIDNLMELYDIKDYNKEEELESFYKYHLLLKDRIIDVISFMNNRLNEKKNILIEGANAAMLDIDFGTYPYVTSSCTTVGGIFSGLGINHKKLNLTIGVVKSYLTRVGCGPFMTELNNEIGAYLREKGHEYGTTTKRPRRCGWLDIPMLLYVKCINSIDIINLTKLDVLSGLKEILLCVGYRSKGTGELLQKGCYPVDEDAPENYEPVYEQFQGWEEDISNCQTFEELPENAQKYVLAIEKYVDSPIVWIGVGPNRNNTITKK.

GTP-binding positions include G25–K31, G53–T55, and K62. D26 serves as the catalytic Proton acceptor. Residues D26 and G53 each coordinate Mg(2+). Residues D26–K29 and N51–H54 contribute to the IMP site. H54 (proton donor) is an active-site residue. Residues T141, R155, N232, and T247 each coordinate IMP. GTP is bound at residue T307. T307 to R313 is a substrate binding site. Position 311 (R311) interacts with IMP. Residues R313, K339 to D341, and G425 to G427 contribute to the GTP site.

Belongs to the adenylosuccinate synthetase family. As to quaternary structure, homodimer. Mg(2+) serves as cofactor.

Its subcellular location is the cytoplasm. It catalyses the reaction IMP + L-aspartate + GTP = N(6)-(1,2-dicarboxyethyl)-AMP + GDP + phosphate + 2 H(+). Its pathway is purine metabolism; AMP biosynthesis via de novo pathway; AMP from IMP: step 1/2. Plays an important role in the salvage pathway for purine nucleotide biosynthesis. Catalyzes the first committed step in the biosynthesis of AMP from IMP. This is Adenylosuccinate synthetase from Plasmodium knowlesi (strain H).